An 897-amino-acid polypeptide reads, in one-letter code: Alanine--tRNA ligase (897 aa).

Residues His-591, His-595, Cys-695, and His-699 each contribute to the Zn(2+) site.

The protein belongs to the class-II aminoacyl-tRNA synthetase family. Requires Zn(2+) as cofactor.

The protein resides in the cytoplasm. The catalysed reaction is tRNA(Ala) + L-alanine + ATP = L-alanyl-tRNA(Ala) + AMP + diphosphate. Its function is as follows. Catalyzes the attachment of alanine to tRNA(Ala) in a two-step reaction: alanine is first activated by ATP to form Ala-AMP and then transferred to the acceptor end of tRNA(Ala). Also edits incorrectly charged Ser-tRNA(Ala) and Gly-tRNA(Ala) via its editing domain. The protein is Alanine--tRNA ligase of Methanobrevibacter smithii (strain ATCC 35061 / DSM 861 / OCM 144 / PS).